Consider the following 1117-residue polypeptide: DNA polymerase II large subunit (1117 aa).

Basic and acidic residues predominate over residues Ser279–Lys294. Residues Ser279–Ala299 are disordered.

The protein belongs to the archaeal DNA polymerase II family. In terms of assembly, heterodimer of a large subunit and a small subunit.

The catalysed reaction is DNA(n) + a 2'-deoxyribonucleoside 5'-triphosphate = DNA(n+1) + diphosphate. It carries out the reaction Exonucleolytic cleavage in the 3'- to 5'-direction to yield nucleoside 5'-phosphates.. Functionally, possesses two activities: a DNA synthesis (polymerase) and an exonucleolytic activity that degrades single-stranded DNA in the 3'- to 5'-direction. Has a template-primer preference which is characteristic of a replicative DNA polymerase. The sequence is that of DNA polymerase II large subunit from Methanosphaera stadtmanae (strain ATCC 43021 / DSM 3091 / JCM 11832 / MCB-3).